Reading from the N-terminus, the 188-residue chain is Probable manganese efflux pump MntP (188 aa).

The next 6 membrane-spanning stretches (helical) occupy residues 3-23 (FTAT…ASIG), 41-61 (LIFG…GILA), 66-86 (LEWN…RMII), 106-128 (WLLV…GLAF), 143-163 (ATLI…PMLG), and 168-188 (ILGG…HFHG).

The protein belongs to the MntP (TC 9.B.29) family.

The protein resides in the cell inner membrane. In terms of biological role, probably functions as a manganese efflux pump. The sequence is that of Probable manganese efflux pump MntP from Salmonella typhimurium (strain LT2 / SGSC1412 / ATCC 700720).